Here is a 684-residue protein sequence, read N- to C-terminus: Cleavage and polyadenylation specificity factor subunit 3 (684 aa).

Ser2 carries the post-translational modification N-acetylserine. Zn(2+) is bound by residues His71, His73, Asp75, His76, His158, and Asp179. His396 serves as the catalytic Proton donor. Zn(2+) is bound at residue His418. Residues Lys462, Lys465, and Lys545 each participate in a glycyl lysine isopeptide (Lys-Gly) (interchain with G-Cter in SUMO) cross-link. Ser659 is subject to Phosphoserine. Thr681 is modified (phosphothreonine).

The protein belongs to the metallo-beta-lactamase superfamily. RNA-metabolizing metallo-beta-lactamase-like family. CPSF3 subfamily. As to quaternary structure, component of the cleavage and polyadenylation specificity factor (CPSF) complex, composed of CPSF1, CPSF2, CPSF3, CPSF4 and FIP1L1. Interacts with CPSF2, CSTF2 and SYMPK. Interacts with TUT1; the interaction is direct and mediates the recruitment of the CPSF complex on the 3'UTR of pre-mRNAs. Interacts with WDR33. Interacts with ZC3H3. Interacts with ISY1; this interaction is in an RNA independent manner. Interacts with the microprocessor complex subunits DGCR8 and DROSHA; this interaction is in an RNA dependent manner. The cofactor is Zn(2+). In terms of processing, sumoylated on Lys-462, Lys-465 and Lys-545, preferentially by SUMO3.

Its subcellular location is the nucleus. Its function is as follows. Component of the cleavage and polyadenylation specificity factor (CPSF) complex that plays a key role in pre-mRNA 3'-end formation, recognizing the AAUAAA signal sequence and interacting with poly(A) polymerase and other factors to bring about cleavage and poly(A) addition. Has endonuclease activity, and functions as an mRNA 3'-end-processing endonuclease. Also involved in the histone 3'-end pre-mRNA processing. U7 snRNP-dependent protein that induces both the 3' endoribonucleolytic cleavage of histone pre-mRNAs and acts as a 5' to 3' exonuclease for degrading the subsequent downstream cleavage product (DCP) of mature histone mRNAs. Cleavage occurs after the 5'-ACCCA-3' sequence in the histone pre-mRNA leaving a 3'hydroxyl group on the upstream fragment containing the stem loop (SL) and 5' phosphate on the downstream cleavage product (DCP) starting with CU nucleotides. The U7-dependent 5' to 3' exonuclease activity is processive and degrades the DCP RNA substrate even after complete removal of the U7-binding site. Binds to the downstream cleavage product (DCP) of histone pre-mRNAs and the cleaved DCP RNA substrate in a U7 snRNP dependent manner. Required for the selective processing of microRNAs (miRNAs) during embryonic stem cell differentiation via its interaction with ISY1. Required for entering/progressing through S-phase of the cell cycle. Required for the biogenesis of all miRNAs from the pri-miR-17-92 primary transcript except miR-92a. Only required for the biogenesis of miR-290 and miR-96 from the pri-miR-290-295 and pri-miR-96-183 primary transcripts, respectively. The sequence is that of Cleavage and polyadenylation specificity factor subunit 3 (Cpsf3) from Mus musculus (Mouse).